Here is a 506-residue protein sequence, read N- to C-terminus: Histidine ammonia-lyase (506 aa).

Residues 142–144 constitute a cross-link (5-imidazolinone (Ala-Gly)); the sequence is ASG. 2,3-didehydroalanine (Ser) is present on Ser-143.

The protein belongs to the PAL/histidase family. Post-translationally, contains an active site 4-methylidene-imidazol-5-one (MIO), which is formed autocatalytically by cyclization and dehydration of residues Ala-Ser-Gly.

The protein localises to the cytoplasm. The enzyme catalyses L-histidine = trans-urocanate + NH4(+). Its pathway is amino-acid degradation; L-histidine degradation into L-glutamate; N-formimidoyl-L-glutamate from L-histidine: step 1/3. In Bacillus cereus (strain ATCC 14579 / DSM 31 / CCUG 7414 / JCM 2152 / NBRC 15305 / NCIMB 9373 / NCTC 2599 / NRRL B-3711), this protein is Histidine ammonia-lyase.